The sequence spans 121 residues: Small ribosomal subunit protein eS24 (121 aa).

It belongs to the eukaryotic ribosomal protein eS24 family.

This chain is Small ribosomal subunit protein eS24, found in Pyrobaculum arsenaticum (strain DSM 13514 / JCM 11321 / PZ6).